Reading from the N-terminus, the 262-residue chain is 26 kDa secreted antigen (262 aa).

The first 21 residues, 1 to 21 (MSVVHKACLIALLFVSSGVAQ), serve as a signal peptide directing secretion. ShKT domains lie at 23–57 (CMDSASDCAANAGSCFTRPVSQVLQNRCQRTCNTC) and 59–93 (CRDEANNCAASINLCQNPTFEPLVRDRCQKTCGLC). Cystine bridges form between C23–C57, C30–C50, C37–C54, C59–C93, C66–C86, and C73–C90.

The protein belongs to the phosphatidylethanolamine-binding protein family.

Its subcellular location is the secreted. Binds phosphatidylethanolamine. In Toxocara canis (Canine roundworm), this protein is 26 kDa secreted antigen (TES-26).